We begin with the raw amino-acid sequence, 443 residues long: Trigger factor (443 aa).

One can recognise a PPIase FKBP-type domain in the interval Gly-161–Pro-246.

Belongs to the FKBP-type PPIase family. Tig subfamily.

It is found in the cytoplasm. The catalysed reaction is [protein]-peptidylproline (omega=180) = [protein]-peptidylproline (omega=0). Functionally, involved in protein export. Acts as a chaperone by maintaining the newly synthesized protein in an open conformation. Functions as a peptidyl-prolyl cis-trans isomerase. This chain is Trigger factor, found in Legionella pneumophila (strain Lens).